An 88-amino-acid chain; its full sequence is Small ribosomal subunit protein uS19 (88 aa).

Belongs to the universal ribosomal protein uS19 family.

In terms of biological role, protein S19 forms a complex with S13 that binds strongly to the 16S ribosomal RNA. The chain is Small ribosomal subunit protein uS19 (rpsS) from Mycoplasma capricolum subsp. capricolum (strain California kid / ATCC 27343 / NCTC 10154).